A 373-amino-acid polypeptide reads, in one-letter code: NAD-dependent protein deacylase SRT2 (373 aa).

The N-terminal 47 residues, M1 to V47, are a transit peptide targeting the mitochondrion. The region spanning D75 to L373 is the Deacetylase sirtuin-type domain. NAD(+) is bound by residues G100–S120 and Q179–D182. The active-site Proton acceptor is the H196. 4 residues coordinate Zn(2+): C204, C207, C271, and C274. NAD(+) is bound by residues G311–S313, N337–G339, and V355.

This sequence belongs to the sirtuin family. Class II subfamily. As to quaternary structure, binds to the promoter region of genes influenced by ethylene. Interacts with ENAP1; this interaction is enhanced in the presence of ethylene. Zn(2+) is required as a cofactor.

It is found in the mitochondrion matrix. The protein resides in the nucleus. The enzyme catalyses N(6)-acetyl-L-lysyl-[protein] + NAD(+) + H2O = 2''-O-acetyl-ADP-D-ribose + nicotinamide + L-lysyl-[protein]. Functionally, NAD-dependent protein deacylase. Catalyzes the NAD-dependent hydrolysis of acyl groups from lysine residues. Involved in responses to ethylene leading to the transcriptional repression of some ethylene-responsive genes via the regulation of histone acetylation H3K9Ac. Negatively regulates plant basal defense against plant pathogens, possibly by suppressing salicylic acid biosynthesis. The protein is NAD-dependent protein deacylase SRT2 of Arabidopsis thaliana (Mouse-ear cress).